A 163-amino-acid chain; its full sequence is Cytosolic iron-sulfur assembly component 2B (163 aa).

It belongs to the MIP18 family.

The protein resides in the nucleus. The protein localises to the cytoplasm. It is found in the cytoskeleton. It localises to the spindle. In terms of biological role, component of the cytosolic iron-sulfur (Fe/S) protein assembly machinery. Required for the maturation of extramitochondrial Fe/S proteins. May play a role in chromosome segregation through establishment of sister chromatid cohesion. In Dictyostelium discoideum (Social amoeba), this protein is Cytosolic iron-sulfur assembly component 2B.